A 426-amino-acid polypeptide reads, in one-letter code: Enolase (426 aa).

Residue Q163 participates in (2R)-2-phosphoglycerate binding. Residue E205 is the Proton donor of the active site. D242, E286, and D313 together coordinate Mg(2+). (2R)-2-phosphoglycerate contacts are provided by K338, R367, S368, and K389. The Proton acceptor role is filled by K338.

It belongs to the enolase family. Requires Mg(2+) as cofactor.

It localises to the cytoplasm. It is found in the secreted. The protein resides in the cell surface. It catalyses the reaction (2R)-2-phosphoglycerate = phosphoenolpyruvate + H2O. It functions in the pathway carbohydrate degradation; glycolysis; pyruvate from D-glyceraldehyde 3-phosphate: step 4/5. Its function is as follows. Catalyzes the reversible conversion of 2-phosphoglycerate (2-PG) into phosphoenolpyruvate (PEP). It is essential for the degradation of carbohydrates via glycolysis. In Helicobacter pylori (strain G27), this protein is Enolase.